The primary structure comprises 660 residues: ATPase-like fidgetin (660 aa).

Disordered regions lie at residues 141–186 and 209–334; these read KQIY…EDPF and ALSS…ADSK. Over residues 145-161 the composition is skewed to low complexity; sequence SKHSPPSTSTSSIVSSS. Residue serine 177 is modified to Phosphoserine. Residues 213–239 show a composition bias toward polar residues; that stretch reads DTGRSATMNSTTFPTAMKSQSTTKPTL. Residues 240–255 are compositionally biased toward low complexity; the sequence is SNSVSSPSIQVSNNQN. Positions 301–313 are enriched in polar residues; sequence LNSSHDTLGSSTR. Low complexity predominate over residues 314–333; that stretch reads PSSADTAGSPATSPPATADS. Residue 419–426 coordinates ATP; the sequence is GPPGTGKT.

It belongs to the AAA ATPase family.

The protein localises to the nucleus. The protein is ATPase-like fidgetin (alf1) of Schizosaccharomyces pombe (strain 972 / ATCC 24843) (Fission yeast).